A 645-amino-acid polypeptide reads, in one-letter code: Protein LHY (645 aa).

S6 carries the phosphoserine modification. Positions 19-73 constitute an HTH myb-type domain; sequence TITKQRERWTEDEHERFLEALRLYGRAWQRIEEHIGTKTAVQIRSHAQKFFTKLE. The segment at residues 46–69 is a DNA-binding region (H-T-H motif); that stretch reads WQRIEEHIGTKTAVQIRSHAQKFF. 4 disordered regions span residues 89–127, 149–212, 410–437, and 458–500; these read IEIPPPRPKRKPNTPYPRKPGNNGTSSSQVSSAKDAKLV, EKTS…GTTV, QNLASKSPASSSDDSDETGVTKLNADSK, and AQKK…TDEN. Polar residues predominate over residues 110–120; the sequence is NNGTSSSQVSS. Over residues 149–158 the composition is skewed to basic and acidic residues; sequence EKTSTGKENQ. Positions 159–169 are enriched in polar residues; it reads DENCSGVSTVN. The segment covering 197-207 has biased composition (basic and acidic residues); sequence VPKKNKDKDGN. A compositionally biased stretch (polar residues) spans 468–478; that stretch reads SCGSNTPSGSD. Over residues 483–498 the composition is skewed to basic and acidic residues; sequence ALDKMEKDKEDVKETD.

As to quaternary structure, homodimer or heterodimer with CCA1. Interacts with CCA1 (via internal domain); independently of photoperiod. Functions probably as part of a large complex. Interacts with CKB1 and CKB3. Interacts with LNK1 and LNK2. Phosphorylated by CK2. Expressed in leaves, roots, stems, flowers and siliques.

It is found in the nucleus. Transcription factor involved in the circadian clock. Binds to the promoter region of APRR1/TOC1 and TCP21/CHE to repress their transcription. Represses both CCA1 and itself. May recognize the promoter of JMJ14 to regulates its expression during the night in a circadian manner. The sequence is that of Protein LHY from Arabidopsis thaliana (Mouse-ear cress).